We begin with the raw amino-acid sequence, 199 residues long: Recombination protein RecR (199 aa).

A C4-type zinc finger spans residues 57-72; it reads CSICGNITESDPCMIC. A Toprim domain is found at 80–176; the sequence is SKVVVVEQPK…KVTRLAHGLA (97 aa).

It belongs to the RecR family.

Its function is as follows. May play a role in DNA repair. It seems to be involved in an RecBC-independent recombinational process of DNA repair. It may act with RecF and RecO. The sequence is that of Recombination protein RecR from Ligilactobacillus salivarius (strain UCC118) (Lactobacillus salivarius).